Consider the following 92-residue polypeptide: Small ribosomal subunit protein uS19 (92 aa).

Belongs to the universal ribosomal protein uS19 family.

Functionally, protein S19 forms a complex with S13 that binds strongly to the 16S ribosomal RNA. This is Small ribosomal subunit protein uS19 from Brucella ovis (strain ATCC 25840 / 63/290 / NCTC 10512).